A 120-amino-acid polypeptide reads, in one-letter code: U13-lycotoxin-Ls1a (120 aa).

The N-terminal stretch at 1–16 is a signal peptide; that stretch reads MKILFVLISILHAVYC. Positions 17-54 are excised as a propeptide; it reads FSSEEDVDSAYLANELEPVEDINSEQYAALEPKEEHER. 4 disulfides stabilise this stretch: Cys56-Cys70, Cys63-Cys76, Cys69-Cys87, and Cys78-Cys85. Residues 56–95 form the Agouti domain; it reads CADMGQDCKDDCDCCLNIATCNCWFGRYFCSCTFGDYQTC.

It belongs to the neurotoxin 05 (agouti) family. Contains 6 disulfide bonds. Expressed by the venom gland.

Its subcellular location is the secreted. In Lycosa singoriensis (Wolf spider), this protein is U13-lycotoxin-Ls1a.